The sequence spans 325 residues: Probable isoaspartyl peptidase/L-asparaginase GA20639 (325 aa).

The Nucleophile role is filled by T184. Residues R212–D215 and T235–G238 contribute to the substrate site.

The protein belongs to the Ntn-hydrolase family. In terms of assembly, heterodimer of an alpha and beta chain produced by autocleavage. In terms of processing, cleaved into an alpha and beta chain by autocatalysis; this activates the enzyme. The N-terminal residue of the beta subunit is responsible for the nucleophile hydrolase activity.

The catalysed reaction is L-asparagine + H2O = L-aspartate + NH4(+). The enzyme catalyses Cleavage of a beta-linked Asp residue from the N-terminus of a polypeptide.. In terms of biological role, has both L-asparaginase and beta-aspartyl peptidase activity. Does not have aspartylglucosaminidase activity and is inactive toward GlcNAc-L-Asn. Likewise, has no activity toward glutamine. The polypeptide is Probable isoaspartyl peptidase/L-asparaginase GA20639 (Drosophila pseudoobscura pseudoobscura (Fruit fly)).